A 177-amino-acid polypeptide reads, in one-letter code: Large ribosomal subunit protein uL6 (177 aa).

A compositionally biased stretch (basic and acidic residues) spans 152–171; the sequence is RPPEPYKGKGVRYDDEEVRR. Residues 152–177 form a disordered region; the sequence is RPPEPYKGKGVRYDDEEVRRKEAKKK.

Belongs to the universal ribosomal protein uL6 family. As to quaternary structure, part of the 50S ribosomal subunit.

Functionally, this protein binds to the 23S rRNA, and is important in its secondary structure. It is located near the subunit interface in the base of the L7/L12 stalk, and near the tRNA binding site of the peptidyltransferase center. The sequence is that of Large ribosomal subunit protein uL6 from Shewanella sp. (strain ANA-3).